The primary structure comprises 861 residues: Putative glutamate--cysteine ligase 2-2 (861 aa).

Residues 1 to 372 form a carboxylate-amine ligase region; sequence MSDARIVAVG…RDVPPAGAAA (372 aa). The segment at 373–861 is unknown; the sequence is ALGSAPAVSA…GSKDTWIPRR (489 aa).

In the N-terminal section; belongs to the glutamate--cysteine ligase type 2 family. YbdK subfamily.

The catalysed reaction is L-cysteine + L-glutamate + ATP = gamma-L-glutamyl-L-cysteine + ADP + phosphate + H(+). Functionally, ATP-dependent carboxylate-amine ligase which exhibits weak glutamate--cysteine ligase activity. The sequence is that of Putative glutamate--cysteine ligase 2-2 from Frankia casuarinae (strain DSM 45818 / CECT 9043 / HFP020203 / CcI3).